A 221-amino-acid chain; its full sequence is Octanoyltransferase (221 aa).

A BPL/LPL catalytic domain is found at 36–221 (KKEDNQLFFC…LRSIFMEIFA (186 aa)). Substrate contacts are provided by residues 81 to 88 (RGGDITYH), 154 to 156 (AIG), and 167 to 169 (GFA). The active-site Acyl-thioester intermediate is the Cys185.

Belongs to the LipB family.

Its subcellular location is the cytoplasm. The catalysed reaction is octanoyl-[ACP] + L-lysyl-[protein] = N(6)-octanoyl-L-lysyl-[protein] + holo-[ACP] + H(+). It participates in protein modification; protein lipoylation via endogenous pathway; protein N(6)-(lipoyl)lysine from octanoyl-[acyl-carrier-protein]: step 1/2. Catalyzes the transfer of endogenously produced octanoic acid from octanoyl-acyl-carrier-protein onto the lipoyl domains of lipoate-dependent enzymes. Lipoyl-ACP can also act as a substrate although octanoyl-ACP is likely to be the physiological substrate. This chain is Octanoyltransferase, found in Parabacteroides distasonis (strain ATCC 8503 / DSM 20701 / CIP 104284 / JCM 5825 / NCTC 11152).